Here is a 463-residue protein sequence, read N- to C-terminus: L-seryl-tRNA(Sec) selenium transferase (463 aa).

An N6-(pyridoxal phosphate)lysine modification is found at K295.

This sequence belongs to the SelA family. As to quaternary structure, homodecamer; pentamer of dimers. Binds only one seryl-tRNA(Sec) per dimer. Pyridoxal 5'-phosphate serves as cofactor.

The protein localises to the cytoplasm. It catalyses the reaction L-seryl-tRNA(Sec) + selenophosphate + H(+) = L-selenocysteinyl-tRNA(Sec) + phosphate. It functions in the pathway aminoacyl-tRNA biosynthesis; selenocysteinyl-tRNA(Sec) biosynthesis; selenocysteinyl-tRNA(Sec) from L-seryl-tRNA(Sec) (bacterial route): step 1/1. In terms of biological role, converts seryl-tRNA(Sec) to selenocysteinyl-tRNA(Sec) required for selenoprotein biosynthesis. The sequence is that of L-seryl-tRNA(Sec) selenium transferase from Salmonella paratyphi B (strain ATCC BAA-1250 / SPB7).